Reading from the N-terminus, the 403-residue chain is uncharacterized protein (403 aa).

12 helical membrane-spanning segments follow: residues 25 to 47 (IAFFLAGFSTFSTLYCVQPILFL), 62 to 81 (SLSASTAMMAFGMLFTGPLS), 88 to 110 (VVMSSSLFLASFCTFCCSNMNSW), 114 to 136 (IFMRALTGLALSGVAAVAMTYLS), 143 to 165 (VLSFSIGLYISGNTIGGFLGRFL), 175 to 197 (WNIALEFISFLAFTSAVLFVYLL), 229 to 251 (LFFMGCILMGSFITLFNYVGYRL), 256 to 278 (FFLGQTTIGLLSIIYLIGVYSSP), 290 to 307 (GVILTLALTMMIFGVLIT), 311 to 330 (IVLLIIVGLTLFAAGFFAAH), 350 to 372 (SIYLFSYYLGSSIFGTFSGIFWI), and 376 to 398 (WLGISIFIITFLCIGILLSIRLL).

The protein belongs to the major facilitator superfamily.

Its subcellular location is the cell membrane. This is an uncharacterized protein from Buchnera aphidicola subsp. Baizongia pistaciae (strain Bp).